Reading from the N-terminus, the 327-residue chain is Phenylalanine--tRNA ligase alpha subunit (327 aa).

E252 provides a ligand contact to Mg(2+).

Belongs to the class-II aminoacyl-tRNA synthetase family. Phe-tRNA synthetase alpha subunit type 1 subfamily. In terms of assembly, tetramer of two alpha and two beta subunits. It depends on Mg(2+) as a cofactor.

It localises to the cytoplasm. It carries out the reaction tRNA(Phe) + L-phenylalanine + ATP = L-phenylalanyl-tRNA(Phe) + AMP + diphosphate + H(+). This is Phenylalanine--tRNA ligase alpha subunit from Yersinia pestis bv. Antiqua (strain Angola).